We begin with the raw amino-acid sequence, 460 residues long: NADH-quinone oxidoreductase subunit N (460 aa).

13 helical membrane passes run 2 to 22 (LLPE…AVML), 28 to 48 (IVAN…LKYS), 65 to 85 (ANIA…MIIY), 104 to 124 (ILLS…LLLF), 155 to 175 (FILG…IYGF), 196 to 216 (LGLV…LSSA), 230 to 250 (PIAS…AILL), 263 to 283 (ISYN…ALGA), 292 to 312 (LMAY…LLRT), 321 to 341 (LYML…IMLL), 363 to 383 (IAAA…LAGF), 400 to 420 (LLAY…LKII), and 438 to 458 (YGLL…SFII).

Belongs to the complex I subunit 2 family. As to quaternary structure, NDH-1 is composed of 14 different subunits. Subunits NuoA, H, J, K, L, M, N constitute the membrane sector of the complex.

It is found in the cell inner membrane. The enzyme catalyses a quinone + NADH + 5 H(+)(in) = a quinol + NAD(+) + 4 H(+)(out). NDH-1 shuttles electrons from NADH, via FMN and iron-sulfur (Fe-S) centers, to quinones in the respiratory chain. The immediate electron acceptor for the enzyme in this species is believed to be ubiquinone. Couples the redox reaction to proton translocation (for every two electrons transferred, four hydrogen ions are translocated across the cytoplasmic membrane), and thus conserves the redox energy in a proton gradient. This chain is NADH-quinone oxidoreductase subunit N, found in Rickettsia bellii (strain RML369-C).